A 271-amino-acid polypeptide reads, in one-letter code: Type III pantothenate kinase (271 aa).

An ATP-binding site is contributed by 6 to 13 (DVRNTHTV). 109-112 (GADR) serves as a coordination point for substrate. Catalysis depends on Asp111, which acts as the Proton acceptor. Asp131 contacts K(+). Residue Ser134 participates in ATP binding. Thr186 is a substrate binding site.

It belongs to the type III pantothenate kinase family. As to quaternary structure, homodimer. The cofactor is NH4(+). It depends on K(+) as a cofactor.

The protein resides in the cytoplasm. The catalysed reaction is (R)-pantothenate + ATP = (R)-4'-phosphopantothenate + ADP + H(+). It functions in the pathway cofactor biosynthesis; coenzyme A biosynthesis; CoA from (R)-pantothenate: step 1/5. Its function is as follows. Catalyzes the phosphorylation of pantothenate (Pan), the first step in CoA biosynthesis. The polypeptide is Type III pantothenate kinase (Mycobacteroides abscessus (strain ATCC 19977 / DSM 44196 / CCUG 20993 / CIP 104536 / JCM 13569 / NCTC 13031 / TMC 1543 / L948) (Mycobacterium abscessus)).